We begin with the raw amino-acid sequence, 281 residues long: 18S rRNA (guanine-N(7))-methyltransferase (281 aa).

A disordered region spans residues 256–281; sequence KARRRRQGKEVCPDTQYTGRKRKPRF.

It belongs to the class I-like SAM-binding methyltransferase superfamily. BUD23/WBSCR22 family. As to quaternary structure, heterodimer with TRMT112; this heterodimerization is necessary for the metabolic stability and activity of the catalytic subunit BUD23. Interacts with GRIP1. Post-translationally, may be ubiquitinated and targeted to degradation in response to pro-inflammatory cytokine signaling.

The protein localises to the nucleus. The protein resides in the nucleoplasm. Its subcellular location is the cytoplasm. It localises to the perinuclear region. The catalysed reaction is a guanosine in 18S rRNA + S-adenosyl-L-methionine = an N(7)-methylguanosine in 18S rRNA + S-adenosyl-L-homocysteine. Functionally, S-adenosyl-L-methionine-dependent methyltransferase that specifically methylates the N(7) position of a guanine in 18S rRNA. Requires the methyltransferase adapter protein TRM112 for full rRNA methyltransferase activity. Involved in the pre-rRNA processing steps leading to small-subunit rRNA production independently of its RNA-modifying catalytic activity. Important for biogenesis end export of the 40S ribosomal subunit independent on its methyltransferase activity. Locus-specific steroid receptor coactivator. Potentiates transactivation by glucocorticoid (NR3C1), mineralocorticoid (NR3C2), androgen (AR) and progesterone (PGR) receptors. Required for the maintenance of open chromatin at the TSC22D3/GILZ locus to facilitate NR3C1 loading on the response elements. Required for maintenance of dimethylation on histone H3 'Lys-79' (H3K79me2), although direct histone methyltransferase activity is not observed in vitro. This Bos taurus (Bovine) protein is 18S rRNA (guanine-N(7))-methyltransferase.